We begin with the raw amino-acid sequence, 290 residues long: 2-dehydro-3-deoxy-phosphogluconate/2-dehydro-3-deoxy-6-phosphogalactonate aldolase (290 aa).

Residues 42-43 (TT), 129-131 (YNY), and 155-157 (KDT) each bind substrate. Lys-155 serves as the catalytic Schiff-base intermediate with substrate.

This sequence belongs to the DapA family. KDPG aldolase subfamily. As to quaternary structure, homotetramer; dimer of dimers.

The catalysed reaction is 2-dehydro-3-deoxy-6-phospho-D-gluconate = D-glyceraldehyde 3-phosphate + pyruvate. The enzyme catalyses 2-dehydro-3-deoxy-6-phospho-D-galactonate = D-glyceraldehyde 3-phosphate + pyruvate. Its pathway is carbohydrate acid metabolism; 2-dehydro-3-deoxy-D-gluconate degradation; D-glyceraldehyde 3-phosphate and pyruvate from 2-dehydro-3-deoxy-D-gluconate: step 2/2. In terms of biological role, involved in the degradation of glucose and galactose via the Entner-Doudoroff pathway. Catalyzes the reversible cleavage of 2-keto-3-deoxy-6-phosphogluconate (KDPG) and 2-keto-3-deoxygluconate (KDG) forming pyruvate and glyceraldehyde 3-phosphate or glyceraldehyde, respectively. It is also able to catalyze the reversible cleavage of 2-keto-3-deoxy-6-phosphogalactonate (KDPGal) and 2-keto-3-deoxygalactonate (KDGal). The polypeptide is 2-dehydro-3-deoxy-phosphogluconate/2-dehydro-3-deoxy-6-phosphogalactonate aldolase (kdgA) (Sulfurisphaera tokodaii (strain DSM 16993 / JCM 10545 / NBRC 100140 / 7) (Sulfolobus tokodaii)).